We begin with the raw amino-acid sequence, 66 residues long: Large ribosomal subunit protein uL29 (66 aa).

It belongs to the universal ribosomal protein uL29 family.

The protein is Large ribosomal subunit protein uL29 of Bartonella quintana (strain Toulouse) (Rochalimaea quintana).